The primary structure comprises 70 residues: Small ribosomal subunit protein bS21 (70 aa).

This sequence belongs to the bacterial ribosomal protein bS21 family.

The chain is Small ribosomal subunit protein bS21 from Polaromonas naphthalenivorans (strain CJ2).